Here is a 411-residue protein sequence, read N- to C-terminus: Citrate synthase (411 aa).

Residues histidine 304 and aspartate 363 contribute to the active site.

It belongs to the citrate synthase family.

It carries out the reaction oxaloacetate + acetyl-CoA + H2O = citrate + CoA + H(+). The protein operates within carbohydrate metabolism; tricarboxylic acid cycle; isocitrate from oxaloacetate: step 1/2. The polypeptide is Citrate synthase (gltA) (Rickettsia akari).